A 492-amino-acid chain; its full sequence is Solute carrier family 2, facilitated glucose transporter member 1 (492 aa).

Position 1 is an N-acetylmethionine (Met1). Topologically, residues 1–11 (MEPSSKKLTGR) are cytoplasmic. A helical membrane pass occupies residues 12–33 (LMLAVGGAVLGSLQFGYNTGVI). Residues 34 to 66 (NAPQKVIEEFYNQTWVHRYGESILPTTLTTLWS) are Extracellular-facing. Asn45 is a glycosylation site (N-linked (GlcNAc...) asparagine). Residues 67-87 (LSVAIFSVGGMIGSFSVGLFV) traverse the membrane as a helical segment. Residues 88-90 (NRF) are Cytoplasmic-facing. Residues 91 to 112 (GRRNSMLMMNLLAFVSAVLMGF) form a helical membrane-spanning segment. Topologically, residues 113-120 (SKLGKSFE) are extracellular. A helical transmembrane segment spans residues 121-144 (MLILGRFIIGVYCGLTTGFVPMYV). Cytochalasin B is bound at residue Thr137. Residues 145 to 155 (GEVSPTALRGA) lie on the Cytoplasmic side of the membrane. A helical membrane pass occupies residues 156–176 (LGTLHQLGIVVGILIAQVFGL). The Extracellular segment spans residues 177 to 185 (DSIMGNKDL). The chain crosses the membrane as a helical span at residues 186–206 (WPLLLSIIFIPALLQCIVLPF). The Cytoplasmic portion of the chain corresponds to 207–271 (CPESPRFLLI…LFRSPAYRQP (65 aa)). Phosphoserine; by PKC/PRKCB is present on Ser226. A helical membrane pass occupies residues 272-293 (ILIAVVLQLSQQLSGINAVFYY). Gln282 is a binding site for cytochalasin B. Residues 282-283 (QQ) and Asn288 each bind D-glucose. The Extracellular portion of the chain corresponds to 294–306 (STSIFEKAGVQQP). Residues 307–328 (VYATIGSGIVNTAFTVVSLFVV) traverse the membrane as a helical segment. Asn317 serves as a coordination point for D-glucose. The Cytoplasmic segment spans residues 329–334 (ERAGRR). Residues 335–355 (TLHLIGLAGMAGCAILMTIAL) form a helical membrane-spanning segment. Residues 356 to 365 (ALLEQLPWMS) lie on the Extracellular side of the membrane. Residues 366 to 388 (YLSIVAIFGFVAFFEVGPGPIPW) form a helical membrane-spanning segment. A D-glucose-binding site is contributed by Glu380. Cytochalasin B is bound at residue Trp388. At 389–401 (FIVAELFSQGPRP) the chain is on the cytoplasmic side. Residues 402–422 (AAIAVAGFSNWTSNFIVGMCF) traverse the membrane as a helical segment. Residue Asn411 coordinates cytochalasin B. The Extracellular segment spans residues 423-429 (QYVEQLC). A helical transmembrane segment spans residues 430-450 (GPYVFIIFTVLLVLFFIFTYF). The Cytoplasmic portion of the chain corresponds to 451–492 (KVPETKGRTFDEIASGFRQGGASQSDKTPEELFHPLGADSQV). Ser465 carries the post-translational modification Phosphoserine. A disordered region spans residues 468–492 (RQGGASQSDKTPEELFHPLGADSQV). The residue at position 478 (Thr478) is a Phosphothreonine. Ser490 is subject to Phosphoserine.

The protein belongs to the major facilitator superfamily. Sugar transporter (TC 2.A.1.1) family. Glucose transporter subfamily. As to quaternary structure, interacts with GIPC (via PDZ domain). Found in a complex with ADD2, DMTN and SLC2A1. Interacts (via C-terminus cytoplasmic region) with DMTN isoform 2. Interacts with SNX27; the interaction is required when endocytosed to prevent degradation in lysosomes and promote recycling to the plasma membrane. Interacts with STOM. Interacts with SGTA (via Gln-rich region). Interacts with isoform 1 of BSG. In terms of processing, phosphorylation at Ser-226 by PKC promotes glucose uptake by increasing cell membrane localization. As to expression, detected in erythrocytes (at protein level). Expressed at variable levels in many human tissues.

Its subcellular location is the cell membrane. The protein localises to the melanosome. It is found in the photoreceptor inner segment. It catalyses the reaction D-glucose(out) = D-glucose(in). It functions in the pathway carbohydrate degradation. The uptake of glucose is inhibited by cytochalasin B and Phe-amide core-scaffold inhibitors GLUT-i1 and GLUT-i2. These inhibitors bind in the central cavity of the inward-open state and overlap the glucose-binding site. Glucose uptake is increased in response to phorbol ester 12-O-tetradecanoylphorbol-13-acetate (TPA) treatment: TPA-induced glucose uptake requires phosphorylation at Ser-226. Interacts with SMIM43; the interaction may promote SLC2A1-mediated glucose transport to meet the energy needs of mesendoderm differentiation. Functionally, facilitative glucose transporter, which is responsible for constitutive or basal glucose uptake. Has a very broad substrate specificity; can transport a wide range of aldoses including both pentoses and hexoses. Most important energy carrier of the brain: present at the blood-brain barrier and assures the energy-independent, facilitative transport of glucose into the brain. In association with BSG and NXNL1, promotes retinal cone survival by increasing glucose uptake into photoreceptors. Required for mesendoderm differentiation. This Homo sapiens (Human) protein is Solute carrier family 2, facilitated glucose transporter member 1.